Here is a 1754-residue protein sequence, read N- to C-terminus: Intraflagellar transport protein 172 homolog (1754 aa).

WD repeat units follow at residues 14-53, 64-103, 110-149, 151-190, 194-232, 283-322, and 519-557; these read EQIQ…RDKF, KNSY…NDKK, PQAS…QSLY, GDSI…EPLG, QHPV…RTFD, ACLY…TVWQ, and TLLS…EHVT. 11 TPR repeats span residues 623 to 656, 690 to 723, 748 to 781, 807 to 840, 852 to 885, 1041 to 1074, 1140 to 1166, 1167 to 1199, 1211 to 1250, 1282 to 1315, and 1698 to 1733; these read KAMW…SKAY, GSDL…DEAV, SEQQ…ARAA, SELY…ARAL, TALE…QKAL, RGKL…EDGY, DEVH…FLKA, NKPR…AVGE, TSNY…AEEH, SRSY…NAED, and FPVR…SPGS.

Belongs to the IFT172 family.

It is found in the cell projection. Its subcellular location is the cilium. In terms of biological role, required for the maintenance and formation of cilia. This chain is Intraflagellar transport protein 172 homolog, found in Drosophila melanogaster (Fruit fly).